The sequence spans 639 residues: MESADSAGKGSTEQSESQRQSQMDRLDREEAFYQFVNNLNEDDYRLMRDNNLLGTPGEITKEELLRRLQQIKEGPPQPSTEGTRGDPVSASGDPAEDSSNGDSIIDWLNSVRQTGNTTRSGQRGNQSWRAVSRTNPNSGDFRFSLEINVNRTSGNPSMPSLEQSSEMPGAEDMEVSSQGENENEPEPVAPRVAQAEVTEEAPVQRGQRRARSRSPDQRRTRARTDRSRSPLHQAVEPPIRRAQHSSSQTVDASSTEEAEGSSRTRHHVSSQMQNSSSSNETEGSSRTRQHITARQQALGTEGQSQSQTQTQSQSQTQTQSQTQSQSTVHLSNPESRSSSQPPQTDSSSNAETTGTGQRPPTIVLDLQVRRVRPGDYRQRDSIANRTRSRSQTPNNTVTYESERGGFRRTFSRSERAGVRTYVSTIRIPIRRILNTGLSETTSVAIQTMLRQIMTGFGELSYFMYNDNDTDPNNPTPVSPPAAVPGEAQNLVSPEPPAPIVEPPEPVAPVESEEGSNVSTSSARREGRNSRGGVTFEESGSLPFLSLAQFFLLNEDDDDQPRGLTKEQIDNLSTRNFGENDALKTCSVCITEYTEGNKLRKLPCSHEYHVHCIDRWLSENSTCPICRRAVLVAGNRESIV.

Disordered stretches follow at residues 1–28, 67–403, and 467–534; these read MESA…RLDR, RLQQ…ESER, and NDTD…GGVT. The segment covering 11–21 has biased composition (low complexity); it reads STEQSESQRQS. 2 stretches are compositionally biased toward polar residues: residues 110–138 and 147–166; these read SVRQ…NPNS and INVN…QSSE. A compositionally biased stretch (basic and acidic residues) spans 213 to 228; the sequence is RSPDQRRTRARTDRSR. The segment covering 244-253 has biased composition (polar residues); it reads HSSSQTVDAS. Over residues 269–286 the composition is skewed to low complexity; that stretch reads SSQMQNSSSSNETEGSSR. Polar residues predominate over residues 290–302; sequence HITARQQALGTEG. 2 stretches are compositionally biased toward low complexity: residues 303–327 and 335–348; these read QSQS…SQST and SRSS…DSSS. Residues 349–358 are compositionally biased toward polar residues; sequence NAETTGTGQR. Residues 372–382 show a composition bias toward basic and acidic residues; the sequence is RPGDYRQRDSI. Polar residues predominate over residues 383–399; it reads ANRTRSRSQTPNNTVTY. Pro residues-rich tracts occupy residues 473 to 482 and 493 to 506; these read NPTPVSPPAA and PEPP…PEPV. The RING-type; atypical zinc-finger motif lies at 585–626; it reads CSVCITEYTEGNKLRKLPCSHEYHVHCIDRWLSENSTCPICR. The PDZ-binding signature appears at 636 to 639; sequence ESIV.

This sequence belongs to the RNF12 family. As to quaternary structure, forms homodimers through the C-terminal region. The N-terminus interacts with the homeobox of LIM/homeobox factor lhx1/lim1, with lhx3/lim3 and lhx5/lim5, and with the N-terminus of ldb1.

Its subcellular location is the nucleus. It catalyses the reaction S-ubiquitinyl-[E2 ubiquitin-conjugating enzyme]-L-cysteine + [acceptor protein]-L-lysine = [E2 ubiquitin-conjugating enzyme]-L-cysteine + N(6)-ubiquitinyl-[acceptor protein]-L-lysine.. The protein operates within protein modification; protein ubiquitination. In terms of biological role, acts as an E3 ubiquitin-protein ligase specific for ldb1, mediating ubiquitination and proteasome-dependent degradation of excess ldb1 in a RING-dependent manner. Does not degrade ldb1 bound to lhx1/lim1, nor lim1 itself and thus contributes to the establishment of proper ldb1-lhx1/lim1 stoichiometry and the formation of a ldb1-lhx1/lim1 complex. Interferes with Spemann organizer function and suppresses secondary axis formation induced by ldb1 and lhx1/lim1. The polypeptide is E3 ubiquitin-protein ligase RNF12 (Xenopus tropicalis (Western clawed frog)).